Reading from the N-terminus, the 349-residue chain is MDENKKRALAAALGQIEKQFGKGAVMRMGDHERQAIPAISTGSLGLDIALGIGGLPKGRIVEIYGPESSGKTTLTLSTIAEAQKQGATCAFVDAEHALDPDYAAKLGVNVDDLLVSQPDTGEQALEITDMLVRSNAVDVIIVDSVAALVPKAEIEGEMGDQHVGLQARLMSQALRKITGNIKNANCLVIFINQIRMKIGVMFGNPETTTGGNALKFYASVRLDIRRTGAVKESDEVIGSETRVKVVKNKVAPPFRQAEFQILYGKGIYRNGEIIDLGVQLGLLEKSGAWYSYQGSKIGQGKANAAKFLEDNPEVAAAVEKSIRDQLLAAPASARPAALADEPADADLDY.

Residue 65–72 (GPESSGKT) coordinates ATP.

It belongs to the RecA family.

It localises to the cytoplasm. Functionally, can catalyze the hydrolysis of ATP in the presence of single-stranded DNA, the ATP-dependent uptake of single-stranded DNA by duplex DNA, and the ATP-dependent hybridization of homologous single-stranded DNAs. It interacts with LexA causing its activation and leading to its autocatalytic cleavage. The chain is Protein RecA from Azotobacter vinelandii (strain DJ / ATCC BAA-1303).